The following is an 846-amino-acid chain: Auxin response factor 2A (846 aa).

Polar residues predominate over residues 1-12 (MAASEVSIQGYS). The disordered stretch occupies residues 1–30 (MAASEVSIQGYSEPSDGSRPVSETGRSSSG). A DNA-binding region (TF-B3) is located at residues 146 to 248 (FCKTLTASDT…ELRVGVRRAM (103 aa)). 2 disordered regions span residues 380-423 (PPAL…HSQA) and 660-693 (DMNI…GVAA). 2 stretches are compositionally biased toward polar residues: residues 398–408 (ILPTSPDSSVL) and 414–423 (SRATADHSQA). A compositionally biased stretch (basic and acidic residues) spans 675–693 (SDQRSEQSKGSKVDDGVAA). The region spanning 720 to 804 (RSCTKVHKQG…RKIFIYTKEE (85 aa)) is the PB1 domain. Composition is skewed to polar residues over residues 809 to 824 (NPGT…SSVA) and 836 to 846 (QLPSESGQAES). The segment at 809 to 846 (NPGTLNSKGEDTSSVAEGSDAKEVKNLQLPSESGQAES) is disordered.

It belongs to the ARF family. As to quaternary structure, homodimers and heterodimers. Interacts with ASR1. In terms of tissue distribution, expressed in root, leaf and flower. Expressed in flower buds about three days before opening including ovary, petal and sepal with the highest in stamen. Expressed in stem. Expressed in fruit. Expressed in seeds.

Its subcellular location is the nucleus. Functionally, auxin response factors (ARFs) are transcriptional factors that bind specifically to the DNA sequence 5'-TGTCTC-3' found in the auxin-responsive promoter elements (AuxREs). Could act as transcriptional activator or repressor. Involved in the control of fruit ripening process. Regulates expression of a number of ripening regulators, transcription factors, and ethylene biosynthesis and signaling components. May act as a transcriptional repressor of auxin-responsive genes. Regulates vegetative growth, lateral root formation and flower organ senescence, possibly partially by regulating gene expression of auxin and ethylene response factor (ERF) genes. Plays a negative role in axillary shoot meristem formation. The chain is Auxin response factor 2A from Solanum lycopersicum (Tomato).